A 481-amino-acid chain; its full sequence is Glutamyl-tRNA(Gln) amidotransferase subunit A (481 aa).

Catalysis depends on charge relay system residues Lys-76 and Ser-151. Ser-175 serves as the catalytic Acyl-ester intermediate.

It belongs to the amidase family. GatA subfamily. In terms of assembly, heterotrimer of A, B and C subunits.

The catalysed reaction is L-glutamyl-tRNA(Gln) + L-glutamine + ATP + H2O = L-glutaminyl-tRNA(Gln) + L-glutamate + ADP + phosphate + H(+). Allows the formation of correctly charged Gln-tRNA(Gln) through the transamidation of misacylated Glu-tRNA(Gln) in organisms which lack glutaminyl-tRNA synthetase. The reaction takes place in the presence of glutamine and ATP through an activated gamma-phospho-Glu-tRNA(Gln). This chain is Glutamyl-tRNA(Gln) amidotransferase subunit A, found in Neisseria meningitidis serogroup A / serotype 4A (strain DSM 15465 / Z2491).